An 833-amino-acid polypeptide reads, in one-letter code: pre-rRNA 2'-O-ribose RNA methyltransferase (833 aa).

Gly-57, Trp-59, Asp-77, Asp-93, and Asp-118 together coordinate S-adenosyl-L-methionine. Lys-158 functions as the Proton acceptor in the catalytic mechanism. Disordered stretches follow at residues 323-349, 363-453, 475-640, 730-767, and 779-833; these read KLDNPDEEETEKPEEKKELTAEEMEEN, KKKR…DEYL, LDDV…SDED, LGKKMEKTRDKASSIVDNPEMSNREKSKAIEKLYSGTD, and IAKK…KNKK. The stretch at 336–386 forms a coiled coil; it reads EEKKELTAEEMEENLQEEMKEYLALVEKKKRKEKKRQNELKRKHQRKIELT. Residues 363-381 show a composition bias toward basic residues; the sequence is KKKRKEKKRQNELKRKHQR. Basic and acidic residues predominate over residues 382–396; the sequence is KIELTMHIPGDKIEE. Positions 423–441 are enriched in acidic residues; sequence SSDEFDSDDSDDDDDDDNN. A coiled-coil region spans residues 455 to 485; sequence QQLDEQYKLYQQRIRKKAAKLDDVKVKKDKI. The segment covering 475–486 has biased composition (basic and acidic residues); that stretch reads LDDVKVKKDKIG. Composition is skewed to acidic residues over residues 490-503 and 542-556; these read YNEDDEEFVEEQEE and SESEPEQDGDDDQDD. Residues 557-566 show a composition bias toward basic and acidic residues; the sequence is ENNKPIDISK. Acidic residues-rich tracts occupy residues 605-614 and 626-640; these read DKDDQDDDDD and PVQEEVEYESDSDED. Composition is skewed to basic and acidic residues over residues 732–741, 751–767, and 794–806; these read KKMEKTRDKA, SNREKSKAIEKLYSGTD, and KIVDKRMKKDLRA.

Belongs to the class I-like SAM-binding methyltransferase superfamily. RNA methyltransferase RlmE family. SPB1 subfamily.

It is found in the nucleus. Its subcellular location is the nucleolus. It catalyses the reaction a ribonucleotide in rRNA + S-adenosyl-L-methionine = a 2'-O-methylribonucleotide in rRNA + S-adenosyl-L-homocysteine + H(+). Functionally, RNA 2'-O-methyltransferase involved in the maturation of rRNA and in the biogenesis of ribosomal subunits. This Dictyostelium discoideum (Social amoeba) protein is pre-rRNA 2'-O-ribose RNA methyltransferase (fsjC).